Here is a 431-residue protein sequence, read N- to C-terminus: NADH-quinone oxidoreductase chain 1 (431 aa).

Glycine 54–glycine 63 is a binding site for NAD(+). Position 167–214 (glycine 167–serine 214) interacts with FMN. Cysteine 346, cysteine 349, cysteine 352, and cysteine 392 together coordinate [4Fe-4S] cluster.

This sequence belongs to the complex I 51 kDa subunit family. As to quaternary structure, NDH-1 is composed of at least 14 different subunits, Nqo1 to Nqo14. The complex has a L-shaped structure, with the hydrophobic arm (subunits Nqo7, Nqo8, Nqo10 to Nqo14) embedded in the inner membrane and the hydrophilic peripheral arm (subunits Nqo1 to Nqo6, Nqo9) protruding into the bacterial cytoplasm. The hydrophilic domain contains all the redox centers. FMN is required as a cofactor. [4Fe-4S] cluster serves as cofactor.

The protein resides in the cell inner membrane. It carries out the reaction a quinone + NADH + 5 H(+)(in) = a quinol + NAD(+) + 4 H(+)(out). Functionally, NDH-1 shuttles electrons from NADH, via FMN and iron-sulfur (Fe-S) centers, to quinones in the respiratory chain. The immediate electron acceptor for the enzyme in this species is believed to be ubiquinone. Couples the redox reaction to proton translocation (for every two electrons transferred, four hydrogen ions are translocated across the cytoplasmic membrane), and thus conserves the redox energy in a proton gradient. The chain is NADH-quinone oxidoreductase chain 1 (nqo1) from Paracoccus denitrificans.